The following is a 101-amino-acid chain: Protein Tat (101 aa).

An interaction with human CREBBP region spans residues 1–24 (MEPVDPNREPWNHPGSQPKTACTN). The transactivation stretch occupies residues 1–48 (MEPVDPNREPWNHPGSQPKTACTNCYCKKCCYHCQVCFLQKGLGISYG). Zn(2+) contacts are provided by Cys22, Cys25, and Cys27. The interval 22–37 (CTNCYCKKCCYHCQVC) is cysteine-rich. At Lys28 the chain carries N6-acetyllysine; by host PCAF. Zn(2+)-binding residues include Cys30, His33, Cys34, and Cys37. A core region spans residues 38–48 (FLQKGLGISYG). Residues 48-101 (GRKKRRQRRSAPPGSKTHQDLIPKQPLSQTQRKPTGPEESKKEVESKAEPDRFD) form a disordered region. A Nuclear localization signal, RNA-binding (TAR), and protein transduction motif is present at residues 49-57 (RKKRRQRRS). The tract at residues 49 to 86 (RKKRRQRRSAPPGSKTHQDLIPKQPLSQTQRKPTGPEE) is interaction with the host capping enzyme RNGTT. Lys50 and Lys51 each carry N6-acetyllysine; by host EP300 and GCN5L2. Asymmetric dimethylarginine; by host PRMT6 is present on residues Arg52 and Arg53. Residue Lys71 forms a Glycyl lysine isopeptide (Lys-Gly) (interchain with G-Cter in ubiquitin) linkage. The segment covering 82-101 (TGPEESKKEVESKAEPDRFD) has biased composition (basic and acidic residues).

It belongs to the lentiviruses Tat family. In terms of assembly, interacts with host CCNT1. Associates with the P-TEFb complex composed at least of Tat, P-TEFb (CDK9 and CCNT1), TAR RNA, RNA Pol II. Recruits the HATs CREBBP, TAF1/TFIID, EP300, PCAF and GCN5L2. Interacts with host KAT5/Tip60; this interaction targets the latter to degradation. Interacts with the host deacetylase SIRT1. Interacts with host capping enzyme RNGTT; this interaction stimulates RNGTT. Binds to host KDR, and to the host integrins ITGAV/ITGB3 and ITGA5/ITGB1. Interacts with host KPNB1/importin beta-1 without previous binding to KPNA1/importin alpha-1. Interacts with EIF2AK2. Interacts with host nucleosome assembly protein NAP1L1; this interaction may be required for the transport of Tat within the nucleus, since the two proteins interact at the nuclear rim. Interacts with host C1QBP/SF2P32; this interaction involves lysine-acetylated Tat. Interacts with the host chemokine receptors CCR2, CCR3 and CXCR4. Interacts with host DPP4/CD26; this interaction may trigger an anti-proliferative effect. Interacts with host LDLR. Interacts with the host extracellular matrix metalloproteinase MMP1. Interacts with host PRMT6; this interaction mediates Tat's methylation. Interacts with, and is ubiquitinated by MDM2/Hdm2. Interacts with host PSMC3 and HTATIP2. Interacts with STAB1; this interaction may overcome SATB1-mediated repression of IL2 and IL2RA (interleukin) in T cells by binding to the same domain than HDAC1. Interacts (when acetylated) with human CDK13, thereby increasing HIV-1 mRNA splicing and promoting the production of the doubly spliced HIV-1 protein Nef. Interacts with host TBP; this interaction modulates the activity of transcriptional pre-initiation complex. Interacts with host RELA. Interacts with host PLSCR1; this interaction negatively regulates Tat transactivation activity by altering its subcellular distribution. In terms of processing, asymmetrical arginine methylation by host PRMT6 seems to diminish the transactivation capacity of Tat and affects the interaction with host CCNT1. Acetylation by EP300, CREBBP, GCN5L2/GCN5 and PCAF regulates the transactivation activity of Tat. EP300-mediated acetylation of Lys-50 promotes dissociation of Tat from the TAR RNA through the competitive binding to PCAF's bromodomain. In addition, the non-acetylated Tat's N-terminus can also interact with PCAF. PCAF-mediated acetylation of Lys-28 enhances Tat's binding to CCNT1. Lys-50 is deacetylated by SIRT1. Post-translationally, polyubiquitination by host MDM2 does not target Tat to degradation, but activates its transactivation function and fosters interaction with CCNT1 and TAR RNA. In terms of processing, phosphorylated by EIF2AK2 on serine and threonine residues adjacent to the basic region important for TAR RNA binding and function. Phosphorylation of Tat by EIF2AK2 is dependent on the prior activation of EIF2AK2 by dsRNA.

The protein localises to the host nucleus. Its subcellular location is the host nucleolus. It localises to the host cytoplasm. It is found in the secreted. Its function is as follows. Transcriptional activator that increases RNA Pol II processivity, thereby increasing the level of full-length viral transcripts. Recognizes a hairpin structure at the 5'-LTR of the nascent viral mRNAs referred to as the transactivation responsive RNA element (TAR) and recruits the cyclin T1-CDK9 complex (P-TEFb complex) that will in turn hyperphosphorylate the RNA polymerase II to allow efficient elongation. The CDK9 component of P-TEFb and other Tat-activated kinases hyperphosphorylate the C-terminus of RNA Pol II that becomes stabilized and much more processive. Other factors such as HTATSF1/Tat-SF1, SUPT5H/SPT5, and HTATIP2 are also important for Tat's function. Besides its effect on RNA Pol II processivity, Tat induces chromatin remodeling of proviral genes by recruiting the histone acetyltransferases (HATs) CREBBP, EP300 and PCAF to the chromatin. This also contributes to the increase in proviral transcription rate, especially when the provirus integrates in transcriptionally silent region of the host genome. To ensure maximal activation of the LTR, Tat mediates nuclear translocation of NF-kappa-B by interacting with host RELA. Through its interaction with host TBP, Tat may also modulate transcription initiation. Tat can reactivate a latently infected cell by penetrating in it and transactivating its LTR promoter. In the cytoplasm, Tat is thought to act as a translational activator of HIV-1 mRNAs. Extracellular circulating Tat can be endocytosed by surrounding uninfected cells via the binding to several surface receptors such as CD26, CXCR4, heparan sulfate proteoglycans (HSPG) or LDLR. Neurons are rarely infected, but they internalize Tat via their LDLR. Through its interaction with nuclear HATs, Tat is potentially able to control the acetylation-dependent cellular gene expression. Modulates the expression of many cellular genes involved in cell survival, proliferation or in coding for cytokines or cytokine receptors. Tat plays a role in T-cell and neurons apoptosis. Tat induced neurotoxicity and apoptosis probably contribute to neuroAIDS. Circulating Tat also acts as a chemokine-like and/or growth factor-like molecule that binds to specific receptors on the surface of the cells, affecting many cellular pathways. In the vascular system, Tat binds to ITGAV/ITGB3 and ITGA5/ITGB1 integrins dimers at the surface of endothelial cells and competes with bFGF for heparin-binding sites, leading to an excess of soluble bFGF. This Homo sapiens (Human) protein is Protein Tat.